The following is a 391-amino-acid chain: Ferrochelatase (391 aa).

Residues His-196 and Glu-281 each coordinate Fe cation.

Belongs to the ferrochelatase family.

It is found in the cytoplasm. The catalysed reaction is heme b + 2 H(+) = protoporphyrin IX + Fe(2+). Its pathway is porphyrin-containing compound metabolism; protoheme biosynthesis; protoheme from protoporphyrin-IX: step 1/1. In terms of biological role, catalyzes the ferrous insertion into protoporphyrin IX. The protein is Ferrochelatase of Prochlorococcus marinus (strain SARG / CCMP1375 / SS120).